Here is a 502-residue protein sequence, read N- to C-terminus: Maturase K (502 aa).

This sequence belongs to the intron maturase 2 family. MatK subfamily.

The protein localises to the plastid. It localises to the chloroplast. Usually encoded in the trnK tRNA gene intron. Probably assists in splicing its own and other chloroplast group II introns. Binds its homologous trnK precursor transcript. The sequence is that of Maturase K from Sinapis alba (White mustard).